The chain runs to 890 residues: Protein FAM171A1 (890 aa).

The first 21 residues, 1–21, serve as a signal peptide directing secretion; sequence MSRSATLLLCLLGCHVWKAVT. At 22–303 the chain is on the extracellular side; it reads KTLREPGAGA…VTQDITTYHT (282 aa). N159, N190, and N194 each carry an N-linked (GlcNAc...) asparagine glycan. The helical transmembrane segment at 304 to 324 threads the bilayer; sequence VFLLAILGGMAFILLVLLCLL. The Cytoplasmic segment spans residues 325–890; that stretch reads LYYCRRKCLK…ERPLMAFNIK (566 aa). Phosphoserine is present on residues S358, S360, S371, S422, S443, and S525. 2 disordered regions span residues 730 to 759 and 818 to 890; these read AGRN…RGDA and EGSS…FNIK. Basic and acidic residues predominate over residues 747–757; it reads NEPKSARKGRG. Residues 822 to 833 are compositionally biased toward polar residues; it reads RRSGGQLPSLQE. Residues S849 and S855 each carry the phosphoserine modification. Acidic residues predominate over residues 858–869; the sequence is EEEEDDDDDDQG. The segment covering 870 to 883 has biased composition (basic and acidic residues); that stretch reads EDKKSPWQKREERP.

It belongs to the FAM171 family. In terms of assembly, interacts with ADAM10, NSG1 and OAZ1. As to expression, expressed in heart, brain, liver, skeletal muscle, kidney and pancreas. In brain, expressed by glia, pyramidal neurons and astrocytes (at protein level). Highly expressed in placental trophoblasts.

It localises to the cell membrane. Involved in the regulation of the cytoskeletal dynamics, plays a role in actin stress fiber formation. The chain is Protein FAM171A1 from Homo sapiens (Human).